A 285-amino-acid polypeptide reads, in one-letter code: Pantothenate synthetase (285 aa).

Residue 30–37 coordinates ATP; that stretch reads MGNLHDGH. His-37 (proton donor) is an active-site residue. Gln-61 is a (R)-pantoate binding site. Position 61 (Gln-61) interacts with beta-alanine. Residue 149 to 152 coordinates ATP; that stretch reads GEKD. Gln-155 contacts (R)-pantoate. ATP is bound by residues Ile-178 and 186–189; that span reads LSSR.

This sequence belongs to the pantothenate synthetase family. In terms of assembly, homodimer.

It localises to the cytoplasm. The catalysed reaction is (R)-pantoate + beta-alanine + ATP = (R)-pantothenate + AMP + diphosphate + H(+). It participates in cofactor biosynthesis; (R)-pantothenate biosynthesis; (R)-pantothenate from (R)-pantoate and beta-alanine: step 1/1. Its function is as follows. Catalyzes the condensation of pantoate with beta-alanine in an ATP-dependent reaction via a pantoyl-adenylate intermediate. The sequence is that of Pantothenate synthetase from Buchnera aphidicola subsp. Acyrthosiphon pisum (strain Tuc7).